A 554-amino-acid polypeptide reads, in one-letter code: uncharacterized protein (554 aa).

It to M.jannaschii MJ0047, MJ0162 and MJ1236.

This is an uncharacterized protein from Synechocystis sp. (strain ATCC 27184 / PCC 6803 / Kazusa).